Reading from the N-terminus, the 310-residue chain is Proline-rich 28 kDa antigen (310 aa).

An N-terminal signal peptide occupies residues 1–32; it reads MIQIARTWRVFAGGMATGFIGVVLVTAGKASA. The interval 278–310 is disordered; sequence QAPAPAPGSAPVGLPGQAPGYPPAGTLTPVPPR.

This sequence to M.leprae ML0031.

In Mycobacterium bovis (strain ATCC BAA-935 / AF2122/97), this protein is Proline-rich 28 kDa antigen (mtc28).